A 182-amino-acid chain; its full sequence is Transcription antitermination protein NusB (182 aa).

The interval 159–182 (TPVENSEAEAAGYPVEESIEEDSQ) is disordered.

Belongs to the NusB family.

Its function is as follows. Involved in transcription antitermination. Required for transcription of ribosomal RNA (rRNA) genes. Binds specifically to the boxA antiterminator sequence of the ribosomal RNA (rrn) operons. This Corynebacterium diphtheriae (strain ATCC 700971 / NCTC 13129 / Biotype gravis) protein is Transcription antitermination protein NusB.